Consider the following 320-residue polypeptide: Na(+)-translocating NADH-quinone reductase subunit C (320 aa).

Residues 16–36 (WYIVSFILGLSLFAGVLLSTI) form a helical membrane-spanning segment. Thr-285 bears the FMN phosphoryl threonine mark.

It belongs to the NqrC family. Composed of six subunits; NqrA, NqrB, NqrC, NqrD, NqrE and NqrF. The cofactor is FMN.

The protein resides in the cell inner membrane. It catalyses the reaction a ubiquinone + n Na(+)(in) + NADH + H(+) = a ubiquinol + n Na(+)(out) + NAD(+). NQR complex catalyzes the reduction of ubiquinone-1 to ubiquinol by two successive reactions, coupled with the transport of Na(+) ions from the cytoplasm to the periplasm. NqrA to NqrE are probably involved in the second step, the conversion of ubisemiquinone to ubiquinol. The chain is Na(+)-translocating NADH-quinone reductase subunit C from Chlamydia pneumoniae (Chlamydophila pneumoniae).